The primary structure comprises 130 residues: Small ribosomal subunit protein uS11c (130 aa).

The protein belongs to the universal ribosomal protein uS11 family. In terms of assembly, part of the 30S ribosomal subunit.

Its subcellular location is the plastid. The protein localises to the chloroplast. The sequence is that of Small ribosomal subunit protein uS11c from Chaetosphaeridium globosum (Charophycean green alga).